The sequence spans 156 residues: MQQNKLSLSVQYADTRVQDILTRPLLRKWVKAALLAPAQITLRFVDAAEGQILNRNYRGKDYATNVLTFTYNDDDGSDIADDAVTQADIILCTDVLQREAAEQNKTLIFHAAHLVIHGVLHAQGYDHESDEEAEEMEALEIEFLAALGFPNPYIEA.

H117, H121, and H127 together coordinate Zn(2+).

The protein belongs to the endoribonuclease YbeY family. Zn(2+) is required as a cofactor.

Its subcellular location is the cytoplasm. In terms of biological role, single strand-specific metallo-endoribonuclease involved in late-stage 70S ribosome quality control and in maturation of the 3' terminus of the 16S rRNA. This Herminiimonas arsenicoxydans protein is Endoribonuclease YbeY.